The primary structure comprises 149 residues: Endoribonuclease YbeY (149 aa).

Positions 106, 110, and 116 each coordinate Zn(2+).

Belongs to the endoribonuclease YbeY family. Requires Zn(2+) as cofactor.

Its subcellular location is the cytoplasm. In terms of biological role, single strand-specific metallo-endoribonuclease involved in late-stage 70S ribosome quality control and in maturation of the 3' terminus of the 16S rRNA. The chain is Endoribonuclease YbeY from Methylobacillus flagellatus (strain ATCC 51484 / DSM 6875 / VKM B-1610 / KT).